A 363-amino-acid polypeptide reads, in one-letter code: tRNA N6-adenosine threonylcarbamoyltransferase (363 aa).

Residues H117 and H121 each contribute to the Fe cation site. Substrate-binding positions include L139 to G143, D172, G185, and N287. D315 lines the Fe cation pocket.

It belongs to the KAE1 / TsaD family. It depends on Fe(2+) as a cofactor.

It is found in the cytoplasm. It catalyses the reaction L-threonylcarbamoyladenylate + adenosine(37) in tRNA = N(6)-L-threonylcarbamoyladenosine(37) in tRNA + AMP + H(+). Functionally, required for the formation of a threonylcarbamoyl group on adenosine at position 37 (t(6)A37) in tRNAs that read codons beginning with adenine. Is involved in the transfer of the threonylcarbamoyl moiety of threonylcarbamoyl-AMP (TC-AMP) to the N6 group of A37, together with TsaE and TsaB. TsaD likely plays a direct catalytic role in this reaction. This is tRNA N6-adenosine threonylcarbamoyltransferase from Cereibacter sphaeroides (strain ATCC 17025 / ATH 2.4.3) (Rhodobacter sphaeroides).